A 177-amino-acid chain; its full sequence is Large ribosomal subunit protein uL6 (177 aa).

The protein belongs to the universal ribosomal protein uL6 family. As to quaternary structure, part of the 50S ribosomal subunit.

In terms of biological role, this protein binds to the 23S rRNA, and is important in its secondary structure. It is located near the subunit interface in the base of the L7/L12 stalk, and near the tRNA binding site of the peptidyltransferase center. The protein is Large ribosomal subunit protein uL6 of Halorhodospira halophila (strain DSM 244 / SL1) (Ectothiorhodospira halophila (strain DSM 244 / SL1)).